The primary structure comprises 482 residues: UDP-N-acetylmuramoyl-L-alanyl-D-glutamate--2,6-diaminopimelate ligase (482 aa).

Residue Ser29 participates in UDP-N-acetyl-alpha-D-muramoyl-L-alanyl-D-glutamate binding. 109–115 is an ATP binding site; sequence GTNGKTS. UDP-N-acetyl-alpha-D-muramoyl-L-alanyl-D-glutamate contacts are provided by residues 151–152, Ser178, and Arg186; that span reads TT. Lys218 is modified (N6-carboxylysine). Meso-2,6-diaminopimelate contacts are provided by residues Arg375, 399-402, Gly451, and Glu455; that span reads DNPR. The short motif at 399–402 is the Meso-diaminopimelate recognition motif element; the sequence is DNPR.

The protein belongs to the MurCDEF family. MurE subfamily. It depends on Mg(2+) as a cofactor. Post-translationally, carboxylation is probably crucial for Mg(2+) binding and, consequently, for the gamma-phosphate positioning of ATP.

The protein resides in the cytoplasm. It carries out the reaction UDP-N-acetyl-alpha-D-muramoyl-L-alanyl-D-glutamate + meso-2,6-diaminopimelate + ATP = UDP-N-acetyl-alpha-D-muramoyl-L-alanyl-gamma-D-glutamyl-meso-2,6-diaminopimelate + ADP + phosphate + H(+). It participates in cell wall biogenesis; peptidoglycan biosynthesis. Functionally, catalyzes the addition of meso-diaminopimelic acid to the nucleotide precursor UDP-N-acetylmuramoyl-L-alanyl-D-glutamate (UMAG) in the biosynthesis of bacterial cell-wall peptidoglycan. The protein is UDP-N-acetylmuramoyl-L-alanyl-D-glutamate--2,6-diaminopimelate ligase of Caldanaerobacter subterraneus subsp. tengcongensis (strain DSM 15242 / JCM 11007 / NBRC 100824 / MB4) (Thermoanaerobacter tengcongensis).